The chain runs to 331 residues: Isopenicillin N synthase (331 aa).

Isopenicillin N is bound by residues R87, Y91, S183, and Y189. N-[(5S)-5-amino-5-carboxypentanoyl]-L-cysteinyl-D-valine contacts are provided by R87, Y91, S183, Y189, H214, and D216. In terms of domain architecture, Fe2OG dioxygenase spans 176–288; it reads KPDDTLASVV…RQSLPFFVNL (113 aa). Fe(2+)-binding residues include H214, D216, and H270. R279 lines the 2-oxoglutarate pocket. S281 lines the isopenicillin N pocket. An N-[(5S)-5-amino-5-carboxypentanoyl]-L-cysteinyl-D-valine-binding site is contributed by S281.

This sequence belongs to the iron/ascorbate-dependent oxidoreductase family. In terms of assembly, monomer. It depends on Fe(2+) as a cofactor.

The protein resides in the cytoplasm. It is found in the cytosol. The enzyme catalyses N-[(5S)-5-amino-5-carboxypentanoyl]-L-cysteinyl-D-valine + O2 = isopenicillin N + 2 H2O. It participates in antibiotic biosynthesis; penicillin G biosynthesis; penicillin G from L-alpha-aminoadipate and L-cysteine and L-valine: step 2/3. Functionally, isopenicillin N synthase; part of the gene cluster that mediates the biosynthesis of penicillin, the world's most important antibiotic. IpnA catalyzes the cyclization of the tripeptide N-[(5S)-5-amino-5-carboxypentanoyl]-L-cysteinyl-D-valine (LLD-ACV or ACV) to form isopenicillin N (IPN) that contains the beta-lactam nucleus. The penicillin biosynthesis occurs via 3 enzymatic steps, the first corresponding to the production of the tripeptide N-[(5S)-5-amino-5-carboxypentanoyl]-L-cysteinyl-D-valine (LLD-ACV or ACV) by the NRPS acvA. The tripeptide ACV is then cyclized to isopenicillin N (IPN) by the isopenicillin N synthase ipnA that forms the beta-lactam nucleus. Finally, the alpha-aminoadipyl side chain is exchanged for phenylacetic acid by the isopenicillin N acyltransferase penDE to yield penicillin in the peroxisomal matrix. In Emericella nidulans (strain FGSC A4 / ATCC 38163 / CBS 112.46 / NRRL 194 / M139) (Aspergillus nidulans), this protein is Isopenicillin N synthase.